The following is a 304-amino-acid chain: 15-cis-phytoene synthase (304 aa).

It belongs to the phytoene/squalene synthase family. ATP serves as cofactor. It depends on Mn(2+) as a cofactor. The cofactor is Mg(2+).

It carries out the reaction 2 (2E,6E,10E)-geranylgeranyl diphosphate = 15-cis-phytoene + 2 diphosphate. Its pathway is carotenoid biosynthesis; astaxanthin biosynthesis. The protein operates within carotenoid biosynthesis; phytoene biosynthesis. Its function is as follows. Involved in the biosynthesis of carotenoids for the production of astaxanthin. Catalyzes the condensation of two molecules of geranylgeranyl diphosphate (GGPP) to give prephytoene diphosphate (PPPP) and the subsequent rearrangement of the cyclopropylcarbinyl intermediate to yield 15-cis phytoene. This is 15-cis-phytoene synthase (crtB) from Paracoccus sp. (strain N81106 / MBIC 01143) (Agrobacterium aurantiacum).